A 108-amino-acid polypeptide reads, in one-letter code: MTKTTMHWLAHFQIILLCIWLMCPPSSQAIKCDTCGKECASACGTKHFRTCCFNYLRKRSDPDALRQSSNRRLIDFILLQGRALFTQELRERRHNGTLMDLGLNTYYP.

The first 29 residues, 1–29 (MTKTTMHWLAHFQIILLCIWLMCPPSSQA), serve as a signal peptide directing secretion. 3 disulfides stabilise this stretch: cysteine 32–cysteine 43, cysteine 35–cysteine 52, and cysteine 39–cysteine 51. The propeptide occupies 57 to 108 (RKRSDPDALRQSSNRRLIDFILLQGRALFTQELRERRHNGTLMDLGLNTYYP).

The protein localises to the secreted. Activates the G-protein coupled receptor TrissinR in vitro, leading to increased intracellular calcium ion levels. This chain is Trissin, found in Drosophila melanogaster (Fruit fly).